A 363-amino-acid polypeptide reads, in one-letter code: Chorismate synthase (363 aa).

The segment at 42–61 is disordered; that stretch reads QRDLDRRKPGTSRHTTQRQE. Residues Arg-48 and Arg-54 each coordinate NADP(+). Residues 125–127, 237–238, Gly-277, 292–296, and Arg-318 each bind FMN; these read RSS, NA, and KPTSS.

Belongs to the chorismate synthase family. As to quaternary structure, homotetramer. The cofactor is FMNH2.

The enzyme catalyses 5-O-(1-carboxyvinyl)-3-phosphoshikimate = chorismate + phosphate. Its pathway is metabolic intermediate biosynthesis; chorismate biosynthesis; chorismate from D-erythrose 4-phosphate and phosphoenolpyruvate: step 7/7. Functionally, catalyzes the anti-1,4-elimination of the C-3 phosphate and the C-6 proR hydrogen from 5-enolpyruvylshikimate-3-phosphate (EPSP) to yield chorismate, which is the branch point compound that serves as the starting substrate for the three terminal pathways of aromatic amino acid biosynthesis. This reaction introduces a second double bond into the aromatic ring system. The protein is Chorismate synthase of Pseudomonas aeruginosa (strain LESB58).